We begin with the raw amino-acid sequence, 871 residues long: MIKKFDKKDEESGSGSNPFQHLEKSAVLQEARIFNETPINPRRCLHILTKILYLLNQGEHFGTTEATEAFFAMTRLFQSNDQTLRRMCYLTIKEMATISEDVIIVTSSLTKDMTGKEDVYRGPAIRALCRITDGTMLQAIERYMKQAIVDKVSSVSSSALVSSLHMMKISYDVVKRWINEAQEAASSDNIMVQYHALGVLYHLRKNDRLAVSKMLNKFTKSGLKSQFAYCMLIRIASRLLKETEDGHESPLFDFIESCLRNKHEMVIYEAASAIIHLPNCTARELAPAVSVLQLFCSSPKPALRYAAVRTLNKVAMKHPSAVTACNLDLENLITDSNRSIATLAITTLLKTGSESSVDRLMKQISSFVSEISDEFKVVVVQAISALCQKYPRKHSVMMTFLSNMLRDDGGFEYKRAIVDCIISIVEENPESKEAGLAHLCEFIEDCEHTVLATKILHLLGKEGPRTPVPSKYIRFIFNRVVLENEAVRAAAVSALAKFGAQNESLLPSILVLLQRCMMDTDDEVRDRATFYLNVLQQRQMALNATYIFNGLTVSVPGMEKALHQYTLEPSEKPFDMKSIPLAMAPVFEQKAEITLVATKPEKLAPSRQDIFQEQLAAIPEFLNIGPLFKSSEPVQLTEAETEYFVRCIKHMFTNHIVFQFDCTNTLNDQLLEKVTVQMEPSDSYEVLSCIPAPSLPYNQPGICYTLVRLPDDDPTAVAGSFSCTMKFTVRDCDPNTGVPDEDGYDDEYVLEDLEVTVSDHIQKVLKPNFAAAWEEVGDTFEKEETFALSSTKTLEEAVNNIITFLGMQPCERSDKVPENKNSHSLYLAGIFRGGYDLLVRSRLALADGVTMQVTVRSKERTPVDVILASVG.

The span at M1–E11 shows a compositional bias: basic and acidic residues. Residues M1–H21 form a disordered region. HEAT repeat units lie at residues T64–D101, R283–S320, A321–S355, S356–R392, S395–E430, and P467–S504. T594 is subject to Phosphothreonine.

Belongs to the COPG family. Oligomeric complex. Binds to CDC42. Interacts with JAGN1. Interacts with TMED10 (via cytoplasmic domain).

It is found in the cytoplasm. The protein localises to the cytosol. Its subcellular location is the golgi apparatus membrane. It localises to the cytoplasmic vesicle. The protein resides in the COPI-coated vesicle membrane. In terms of biological role, the coatomer is a cytosolic protein complex that binds to dilysine motifs and reversibly associates with Golgi non-clathrin-coated vesicles, which further mediate biosynthetic protein transport from the ER, via the Golgi up to the trans Golgi network. Coatomer complex is required for budding from Golgi membranes, and is essential for the retrograde Golgi-to-ER transport of dilysine-tagged proteins. In mammals, the coatomer can only be recruited by membranes associated to ADP-ribosylation factors (ARFs), which are small GTP-binding proteins; the complex also influences the Golgi structural integrity, as well as the processing, activity, and endocytic recycling of LDL receptors. This is Coatomer subunit gamma-2 (COPG2) from Homo sapiens (Human).